The primary structure comprises 278 residues: Endoplasmic reticulum junction formation protein lunapark (278 aa).

The Cytoplasmic portion of the chain corresponds to 1–45 (MFSALGKWVRGSRNDKDFVTKYTADLSQITSQIHQLDVALKKSQS). The chain crosses the membrane as a helical span at residues 46–66 (ILSQWQSNLTFYGIALTVLAL). At 67–77 (SYTYWEYHGYR) the chain is on the lumenal side. Residues 78-98 (PYLVVTALLCIGSLILFKWAL) traverse the membrane as a helical segment. Residues 99–278 (TKLYAFYNNN…PSQSEKEKTK (180 aa)) are Cytoplasmic-facing. Positions 107-183 (NNRLRKLAKL…ELEKFKKESH (77 aa)) form a coiled coil. The C4-type; plays a role in ER morphology zinc-finger motif lies at 223–247 (CPQCHWKSNCYRLASKPIIFICPHC). A disordered region spans residues 258-278 (EDAIEAKQPAQPSQSEKEKTK).

Belongs to the lunapark family. In terms of assembly, interacts with RTN1; this interaction is negatively regulated by SEY1. Interacts with SEY1 and YOP1.

Its subcellular location is the endoplasmic reticulum membrane. Its function is as follows. Plays a role in tubular endoplasmic reticulum network formation and maintenance. Works in conjunction with the ER shaping proteins (reticulons RTN1 and RTN2, YOP1), and in antagonism to SEY1 to maintain the network in a dynamic equilibrium. May counterbalance SEY1-directed polygon formation by promoting polygon loss through ring closure. This Saccharomyces cerevisiae (strain ATCC 204508 / S288c) (Baker's yeast) protein is Endoplasmic reticulum junction formation protein lunapark (LNP1).